Here is a 650-residue protein sequence, read N- to C-terminus: p-hydroxybenzoic acid efflux pump subunit AaeB (650 aa).

Transmembrane regions (helical) follow at residues 7 to 27 (FPIKLTFALVAALMIGFHLNL), 32 to 52 (WAVMTAGIVAGGTAFAAGGDP), 61 to 81 (GILRIIGTFIGCVAALVIMIA), 87 to 107 (VVMLLLCCIWAGFCVWLSSLI), 115 to 135 (LGLAGYTALIIVVTANASGGL), 148 to 168 (EIILGILCAILADMIFSPRSI), 365 to 385 (LFWLYTGWTSGSGCMVMLGVI), 402 to 422 (FVYGMTVAVPLGALYFMYILP), 426 to 446 (QSAVLLCIAIGLLGFISGILI), 450 to 470 (QIGTLGAMVGTINVLVLDNPM), and 478 to 498 (IDNALGQWIGSFVALMVILLI).

This sequence belongs to the aromatic acid exporter ArAE (TC 2.A.85) family.

It is found in the cell inner membrane. Its function is as follows. Forms an efflux pump with AaeA. Could function as a metabolic relief valve, allowing to eliminate certain compounds when they accumulate to high levels in the cell. In Pantoea ananatis (strain LMG 20103), this protein is p-hydroxybenzoic acid efflux pump subunit AaeB.